We begin with the raw amino-acid sequence, 273 residues long: Proteasome subunit beta (273 aa).

A propeptide spans 1 to 50 (removed in mature form; by autocatalysis); it reads MRKDGARLALPLFDPRHDPGPDFAALVSRDAARTVPTSGDGSLGAQVPHG. The active-site Nucleophile is the threonine 51.

The protein belongs to the peptidase T1B family. The 20S proteasome core is composed of 14 alpha and 14 beta subunits that assemble into four stacked heptameric rings, resulting in a barrel-shaped structure. The two inner rings, each composed of seven catalytic beta subunits, are sandwiched by two outer rings, each composed of seven alpha subunits. The catalytic chamber with the active sites is on the inside of the barrel. Has a gated structure, the ends of the cylinder being occluded by the N-termini of the alpha-subunits. Is capped by the proteasome-associated ATPase, ARC.

The protein localises to the cytoplasm. It carries out the reaction Cleavage of peptide bonds with very broad specificity.. It participates in protein degradation; proteasomal Pup-dependent pathway. Its activity is regulated as follows. The formation of the proteasomal ATPase ARC-20S proteasome complex, likely via the docking of the C-termini of ARC into the intersubunit pockets in the alpha-rings, may trigger opening of the gate for substrate entry. Interconversion between the open-gate and close-gate conformations leads to a dynamic regulation of the 20S proteasome proteolysis activity. Its function is as follows. Component of the proteasome core, a large protease complex with broad specificity involved in protein degradation. The protein is Proteasome subunit beta of Acidimicrobium ferrooxidans (strain DSM 10331 / JCM 15462 / NBRC 103882 / ICP).